The chain runs to 205 residues: Guanylyl cyclase-activating protein 1 (205 aa).

The N-myristoyl glycine moiety is linked to residue G2. N3 is modified (deamidated asparagine). 4 consecutive EF-hand domains span residues 30 to 48 (SGQL…KNLS), 50 to 85 (ASNQ…VLKG), 86 to 121 (KVEQ…IRAI), and 129 to 164 (TAEE…DELL). Ca(2+) contacts are provided by D63, N65, D67, Y69, E74, D99, D101, N103, C105, E110, D142, N144, D146, E148, and E153.

As to expression, retina.

Regulatory protein that inhibits guanylyl cyclase when free calcium ions concentration is elevated. This Ca(2+)-sensitive regulation of retinal guanylyl cyclase is a key event in recovery of the dark state of rod photoreceptors following light exposure. In Lithobates pipiens (Northern leopard frog), this protein is Guanylyl cyclase-activating protein 1 (GUCA1A).